The following is a 516-amino-acid chain: MSDAQVAKTDVVLVGAGIMSATLSALIKLLEPNWSITLIERLDGAAAESSDPWNNAGTGHSALCELNYTPEGPGGSIDITKAVHVNEQFQVSRQFWTYAVENGVLPDVRNFINPIPHVSFVSGARNVEYLRARYDALVPNPLFATMEYIDDRDEFARRLPFMADKRDFREPVALNWSQDGTDIDFGSLSRQLIGYTAQRGMTTLFGHEVRDLDKQSDGSWSVKVVNRRTGAKRKLNAKFVFVGAGGGALPLLQKAGIEEAKGFGGFPVGGQWLRTGNPELTARHQAKVYGMPPLGAPPMSVPHLDTRVINGKSWLLFGPFAGWSPKFLKQGKVTDLPFSVKPNNLASMLGVGLTEMGLLKYLIGQLLLSEADRVETLRNFAPSARDSDWELDIAGQRVQVIRRKGKGGVLEFGTTVLAAKDGSIAGLLGASPGASTAVPAMLDVMERCFGDRYTAWLPKLKEIVPSLGTKLSDEPKLFQEIWAHGTKVLKLDHPAAGLPVAGTDTEHREPATTVTA.

This sequence belongs to the MQO family. FAD is required as a cofactor.

The enzyme catalyses (S)-malate + a quinone = a quinol + oxaloacetate. It functions in the pathway carbohydrate metabolism; tricarboxylic acid cycle; oxaloacetate from (S)-malate (quinone route): step 1/1. In Mycobacterium sp. (strain MCS), this protein is Probable malate:quinone oxidoreductase.